The chain runs to 178 residues: Dual-action ribosomal maturation protein DarP (178 aa).

It belongs to the DarP family.

It localises to the cytoplasm. Functionally, member of a network of 50S ribosomal subunit biogenesis factors which assembles along the 30S-50S interface, preventing incorrect 23S rRNA structures from forming. Promotes peptidyl transferase center (PTC) maturation. The chain is Dual-action ribosomal maturation protein DarP from Mannheimia succiniciproducens (strain KCTC 0769BP / MBEL55E).